Consider the following 334-residue polypeptide: Dual specificity mitogen-activated protein kinase kinase 6 (334 aa).

Basic residues predominate over residues 1 to 11; it reads MSQSKGKKRNP. Residues 1–34 form a disordered region; sequence MSQSKGKKRNPGLKIPKEAFEQPQTSSTPPRDLD. Positions 4–19 are d domain; it reads SKGKKRNPGLKIPKEA. Residues 53-314 form the Protein kinase domain; sequence LEPIVELGRG…YPELMQHPFF (262 aa). Residues 59–67 and Lys-82 contribute to the ATP site; that span reads LGRGAYGVV. The active-site Proton acceptor is Asp-179. At Ser-207 the chain carries Phosphoserine; by MAPK3. Phosphothreonine; by MAPK3 is present on Thr-211. A DVD domain region spans residues 311 to 334; sequence HPFFTLHESKATDVASFVKSILGD.

This sequence belongs to the protein kinase superfamily. STE Ser/Thr protein kinase family. MAP kinase kinase subfamily. Dimer. Interacts (via its D domain) with its substrates MAPK11, MAPK12, MAPK13 and MAPK14. Interacts (via its DVD domain) with MAP3Ks activators like MAP3K5/ASK1, MAP3K1/MEKK1, MAP3K2/MEKK2, MAP3K3/MEKK3, MAP3K4/MEKK4, MAP3K7/TAK1, MAP3K11/MLK3 and MAP3K17/TAOK2. Interacts with DCTN1. Interacts with EIF2AK2/PKR. Post-translationally, weakly autophosphorylated. Phosphorylated at Ser-207 and Thr-211 by the majority of M3Ks, such as MAP3K5/ASK1, MAP3K1/MEKK1, MAP3K2/MEKK2, MAP3K3/MEKK3, MAP3K4/MEKK4, MAP3K7/TAK1, MAP3K11/MLK3 and MAP3K17/TAOK2. In response to genotoxic stress, MAP3K-phosphorylated MAP2K6 is ubiquitinated and degraded by the SCF(FBXO31) complex.

It is found in the nucleus. Its subcellular location is the cytoplasm. The protein resides in the cytoskeleton. It carries out the reaction L-seryl-[protein] + ATP = O-phospho-L-seryl-[protein] + ADP + H(+). The catalysed reaction is L-threonyl-[protein] + ATP = O-phospho-L-threonyl-[protein] + ADP + H(+). It catalyses the reaction L-tyrosyl-[protein] + ATP = O-phospho-L-tyrosyl-[protein] + ADP + H(+). Activated by dual phosphorylation on Ser-207 and Thr-211 in response to a variety of cellular stresses, including UV radiation, osmotic shock, hypoxia, inflammatory cytokines, interferon gamma (IFNG), and less often by growth factors. MAP2K6/MKK6 is activated by the majority of M3Ks, such as MAP3K5/ASK1, MAP3K1/MEKK1, MAP3K2/MEKK2, MAP3K3/MEKK3, MAP3K4/MEKK4, MAP3K7/TAK1, MAP3K11/MLK3 and MAP3K17/TAOK2. In terms of biological role, dual specificity protein kinase which acts as an essential component of the MAP kinase signal transduction pathway. With MAP3K3/MKK3, catalyzes the concomitant phosphorylation of a threonine and a tyrosine residue in the MAP kinases p38 MAPK11, MAPK12, MAPK13 and MAPK14 and plays an important role in the regulation of cellular responses to cytokines and all kinds of stresses. Especially, MAP2K3/MKK3 and MAP2K6/MKK6 are both essential for the activation of MAPK11 and MAPK13 induced by environmental stress, whereas MAP2K6/MKK6 is the major MAPK11 activator in response to TNF. MAP2K6/MKK6 also phosphorylates and activates PAK6. The p38 MAP kinase signal transduction pathway leads to direct activation of transcription factors. Nuclear targets of p38 MAP kinase include the transcription factors ATF2 and ELK1. Within the p38 MAPK signal transduction pathway, MAP3K6/MKK6 mediates phosphorylation of STAT4 through MAPK14 activation, and is therefore required for STAT4 activation and STAT4-regulated gene expression in response to IL-12 stimulation. The pathway is also crucial for IL-6-induced SOCS3 expression and down-regulation of IL-6-mediated gene induction; and for IFNG-dependent gene transcription. Has a role in osteoclast differentiation through NF-kappa-B transactivation by TNFSF11, and in endochondral ossification and since SOX9 is another likely downstream target of the p38 MAPK pathway. MAP2K6/MKK6 mediates apoptotic cell death in thymocytes. Acts also as a regulator for melanocytes dendricity, through the modulation of Rho family GTPases. In Bos taurus (Bovine), this protein is Dual specificity mitogen-activated protein kinase kinase 6 (MAP2K6).